We begin with the raw amino-acid sequence, 501 residues long: Glucose-6-phosphate isomerase (501 aa).

The segment at 78 to 101 (GIANPTENRAAEHSAERGDGAPES) is disordered. Residues 86 to 97 (RAAEHSAERGDG) are compositionally biased toward basic and acidic residues. The active-site Proton donor is the Glu333. Catalysis depends on residues His364 and Lys474.

It belongs to the GPI family.

Its subcellular location is the cytoplasm. The enzyme catalyses alpha-D-glucose 6-phosphate = beta-D-fructose 6-phosphate. The protein operates within carbohydrate biosynthesis; gluconeogenesis. It functions in the pathway carbohydrate degradation; glycolysis; D-glyceraldehyde 3-phosphate and glycerone phosphate from D-glucose: step 2/4. Its function is as follows. Catalyzes the reversible isomerization of glucose-6-phosphate to fructose-6-phosphate. The protein is Glucose-6-phosphate isomerase of Sphingopyxis alaskensis (strain DSM 13593 / LMG 18877 / RB2256) (Sphingomonas alaskensis).